Reading from the N-terminus, the 578-residue chain is Probable lysosomal cobalamin transporter (578 aa).

A run of 2 helical transmembrane segments spans residues 8–28 (LIWV…SVFI) and 46–66 (IFAI…VALV). N-linked (GlcNAc...) asparagine glycosylation occurs at Asn-70. The next 2 helical transmembrane spans lie at 95-115 (VVYY…IPFT) and 145-165 (TITF…VPVA). The N-linked (GlcNAc...) asparagine glycan is linked to Asn-168. The next 6 membrane-spanning stretches (helical) occupy residues 188–208 (ALTF…VLYT), 312–332 (LLGG…MLLT), 347–367 (GYIL…VQAA), 375–395 (VIFT…IAIV), 419–439 (LTTA…SMVV), and 506–526 (FFGV…LIVV). The interval 539-578 (RQMDEDAEEAEEEGLLASTGRRLDTAWQDITGRSNRQRDS) is disordered. The segment covering 540-552 (QMDEDAEEAEEEG) has biased composition (acidic residues).

Belongs to the LIMR family. LMBRD1 subfamily.

It is found in the lysosome membrane. Its function is as follows. Probable lysosomal cobalamin transporter. Required to export cobalamin from lysosomes allowing its conversion to cofactors. The protein is Probable lysosomal cobalamin transporter of Aspergillus terreus (strain NIH 2624 / FGSC A1156).